The primary structure comprises 208 residues: N-(5'-phosphoribosyl)anthranilate isomerase (208 aa).

It belongs to the TrpF family.

The catalysed reaction is N-(5-phospho-beta-D-ribosyl)anthranilate = 1-(2-carboxyphenylamino)-1-deoxy-D-ribulose 5-phosphate. It participates in amino-acid biosynthesis; L-tryptophan biosynthesis; L-tryptophan from chorismate: step 3/5. This chain is N-(5'-phosphoribosyl)anthranilate isomerase, found in Staphylococcus haemolyticus (strain JCSC1435).